The following is a 402-amino-acid chain: Nicotinate phosphoribosyltransferase (402 aa).

The residue at position 224 (histidine 224) is a Phosphohistidine; by autocatalysis.

Belongs to the NAPRTase family. Post-translationally, transiently phosphorylated on a His residue during the reaction cycle. Phosphorylation strongly increases the affinity for substrates and increases the rate of nicotinate D-ribonucleotide production. Dephosphorylation regenerates the low-affinity form of the enzyme, leading to product release.

The enzyme catalyses nicotinate + 5-phospho-alpha-D-ribose 1-diphosphate + ATP + H2O = nicotinate beta-D-ribonucleotide + ADP + phosphate + diphosphate. Its pathway is cofactor biosynthesis; NAD(+) biosynthesis; nicotinate D-ribonucleotide from nicotinate: step 1/1. Its function is as follows. Catalyzes the synthesis of beta-nicotinate D-ribonucleotide from nicotinate and 5-phospho-D-ribose 1-phosphate at the expense of ATP. This chain is Nicotinate phosphoribosyltransferase, found in Neisseria gonorrhoeae (strain ATCC 700825 / FA 1090).